The sequence spans 1108 residues: Probable arabinosyltransferase A (1108 aa).

The next 13 helical transmembrane spans lie at 12-34 (IPRSVAAVAGIAGLLLCLAVPLL), 204-223 (IVMVLGTLAVLTAIVALAVL), 258-280 (VGLATWIADAAVLATLLLWHVVG), 334-356 (VWMRLPATLAGIGCWLIISHWVL), 368-387 (ANRVAVFTAGAVFVAAWLPF), 397-414 (IALGVLVTWMLVERAIAL), 421-443 (AVAVVVALLTATLAPQGLIAVAA), 463-482 (GLLAPLAVLAAALSLILVVV), 531-553 (FAVLVMLLCLFGMLVILLRRGHV), 582-604 (WAVQFGAFAGLAGALGALTAFAC), 616-638 (TLYVTALLFVLAWATSGINGWFY), 653-675 (IASHPVTSMFLTLSIITGLLAAW), and 696-718 (VLASTPLLVVATIMVVGEVASLT). The segment at 804–825 (PGLVNSDASPNKPNVAYSDSAG) is disordered.

This sequence belongs to the emb family.

It is found in the cell membrane. Functionally, arabinosyl transferase responsible for the polymerization of arabinose into the arabinan of arabinogalactan. The protein is Probable arabinosyltransferase A (embA) of Mycobacterium avium.